Consider the following 118-residue polypeptide: uncharacterized protein (118 aa).

A helical membrane pass occupies residues 95 to 115; the sequence is IIINLVIILAMYAPEIIGKLL.

This sequence belongs to the M.jannaschii MJ0023/MJ0349/MJ1072/MJ1074/MJ1107/MJECL16 family.

It is found in the membrane. This is an uncharacterized protein from Methanocaldococcus jannaschii (strain ATCC 43067 / DSM 2661 / JAL-1 / JCM 10045 / NBRC 100440) (Methanococcus jannaschii).